Here is a 166-residue protein sequence, read N- to C-terminus: Phospholipase A2 inhibitor clone 08 (166 aa).

The signal sequence occupies residues 1–19 (MRLILLSSLLLLGIFLANG). The C-type lectin domain occupies 46 to 161 (LKGAFLTVHR…CDDNLLVVCE (116 aa)). 2 disulfides stabilise this stretch: Cys-83-Cys-160 and Cys-138-Cys-152. Asn-122 carries an N-linked (GlcNAc...) asparagine glycan.

Belongs to the alpha-type phospholipase A2 inhibitor family. As to quaternary structure, homotrimer; non-covalently linked. As to expression, expressed by the liver.

The protein resides in the secreted. In terms of biological role, this phospholipase A2 inhibitor binds directly phospholipase A2 in the presence or absence of calcium. This chain is Phospholipase A2 inhibitor clone 08, found in Bothrops moojeni (Lance-headed viper).